The sequence spans 130 residues: Small ribosomal subunit protein uS8 (130 aa).

This sequence belongs to the universal ribosomal protein uS8 family. As to quaternary structure, part of the 30S ribosomal subunit.

One of the primary rRNA binding proteins, it binds directly to 16S rRNA central domain where it helps coordinate assembly of the platform of the 30S subunit. This Pyrobaculum arsenaticum (strain DSM 13514 / JCM 11321 / PZ6) protein is Small ribosomal subunit protein uS8.